We begin with the raw amino-acid sequence, 246 residues long: Myelin protein P0 (246 aa).

The N-terminal stretch at 1-27 (MFRDLKPAYLFCCSVLYAFSVLRPSQG) is a signal peptide. Residues 28-143 (ISVSTHHNLH…VGTSSDVHLT (116 aa)) enclose the Ig-like V-type domain. Residues 28–150 (ISVSTHHNLH…HLTVYDKIPP (123 aa)) lie on the Extracellular side of the membrane. The cysteines at positions 48 and 125 are disulfide-linked. The N-linked (GlcNAc...) (complex) asparagine glycan is linked to Asn-120. A helical transmembrane segment spans residues 151–178 (VGAGVVSGAIIGTFLGIILLIVGGLYLF). Residues 179–246 (RYIVRRRARS…KLSESKRDKK (68 aa)) are Cytoplasmic-facing. The interval 200-246 (AERGKVSGKAGTVSKGPVLYATLDQSKSGKGASEKKSKLSESKRDKK) is disordered. A compositionally biased stretch (basic and acidic residues) spans 231 to 246 (ASEKKSKLSESKRDKK).

The protein belongs to the myelin P0 protein family. N-glycan is sulfated. In terms of tissue distribution, found only in peripheral nervous system Schwann cells.

The protein resides in the cell membrane. In terms of biological role, creation of an extracellular membrane face which guides the wrapping process and ultimately compacts adjacent lamellae. The sequence is that of Myelin protein P0 (mpz) from Heterodontus francisci (Horn shark).